Here is a 365-residue protein sequence, read N- to C-terminus: Histidinol-phosphate aminotransferase (365 aa).

Residues 1–23 (MSRPVPNPGILDIAPYTPGKSPV) form a disordered region. Lys221 carries the post-translational modification N6-(pyridoxal phosphate)lysine.

It belongs to the class-II pyridoxal-phosphate-dependent aminotransferase family. Histidinol-phosphate aminotransferase subfamily. In terms of assembly, homodimer. Pyridoxal 5'-phosphate serves as cofactor.

The enzyme catalyses L-histidinol phosphate + 2-oxoglutarate = 3-(imidazol-4-yl)-2-oxopropyl phosphate + L-glutamate. The protein operates within amino-acid biosynthesis; L-histidine biosynthesis; L-histidine from 5-phospho-alpha-D-ribose 1-diphosphate: step 7/9. In Rhodopseudomonas palustris (strain BisB18), this protein is Histidinol-phosphate aminotransferase.